Here is a 271-residue protein sequence, read N- to C-terminus: Zinc finger protein 501 (271 aa).

C2H2-type zinc fingers lie at residues 22–44 (SKCS…QRIH), 50–72 (YVCS…LRIH), 78–100 (YKCN…LRIH), 106–128 (YKCN…QRIH), 134–156 (YKCA…QRSH), 162–184 (FKCN…QRIH), 190–212 (YTCT…ERTH), 218–240 (YKCS…YRIH), and 246–268 (YECF…QRLH).

It belongs to the krueppel C2H2-type zinc-finger protein family.

The protein localises to the nucleus. It localises to the nucleolus. May be involved in transcriptional regulation. Essential for Golgi structural integrity. The chain is Zinc finger protein 501 (ZNF501) from Pongo abelii (Sumatran orangutan).